A 288-amino-acid chain; its full sequence is Phosphatidylglycerol--prolipoprotein diacylglyceryl transferase (288 aa).

Helical transmembrane passes span 8 to 28, 49 to 69, 79 to 99, and 109 to 129; these read IGPI…FVGI, AFVA…LFNL, ILAV…GIAG, and INPL…QAIG. Arg-130 provides a ligand contact to a 1,2-diacyl-sn-glycero-3-phospho-(1'-sn-glycerol). Transmembrane regions (helical) follow at residues 203–223, 232–252, and 259–279; these read PAML…WFIL, GYMW…VSFF, and FFNF…SIFF.

Belongs to the Lgt family.

The protein localises to the cell inner membrane. It catalyses the reaction L-cysteinyl-[prolipoprotein] + a 1,2-diacyl-sn-glycero-3-phospho-(1'-sn-glycerol) = an S-1,2-diacyl-sn-glyceryl-L-cysteinyl-[prolipoprotein] + sn-glycerol 1-phosphate + H(+). It participates in protein modification; lipoprotein biosynthesis (diacylglyceryl transfer). In terms of biological role, catalyzes the transfer of the diacylglyceryl group from phosphatidylglycerol to the sulfhydryl group of the N-terminal cysteine of a prolipoprotein, the first step in the formation of mature lipoproteins. The chain is Phosphatidylglycerol--prolipoprotein diacylglyceryl transferase from Fusobacterium nucleatum subsp. nucleatum (strain ATCC 25586 / DSM 15643 / BCRC 10681 / CIP 101130 / JCM 8532 / KCTC 2640 / LMG 13131 / VPI 4355).